Here is a 484-residue protein sequence, read N- to C-terminus: MKIAIITDGSVEMGMGHVYRTLSLANELRKFNVNEIIFFTKSDEDVIKKIEENGFKVIKCSDNNDILKNIKNIKPDVVIIDDLGIEEDFAKNIRELCKKLIFFDNPNPSSNKYADIVVNAIVGSELKNRKYFDEENKTLYFYGPKYLILRNEFYKVKKEMLSRSKNKETKNILIAFGGSDPSNLTCKVLEELLSKDRDFNINVVLGPKFQYEDELNNLLKRYSKSDKIKIYKNIDNMAELMKDNDLIITSPGMTMFEALFLGIPVVVLYQNELQRECYDDYLKKISKTHLNPLKEGYFIDAEHTDLHIGKGKFEIIEAITNIYNCKKIGEDSKIIIRQITDNDLELLMAWRSNPLIYKFFYIQKEPLKWEEHYSWWMSRENRVDWIILLRENNTIRKVGSVNVSQLNTDNPEIGILIGEFFLWGKHIGRHSVSLVLKWLKNIGYKKAHARILENNIRSIKLFESLGFKKTKKGRENEWIYEVNL.

Positions 334–484 (IIIRQITDND…ENEWIYEVNL (151 aa)) constitute an N-acetyltransferase domain.

This is an uncharacterized protein from Methanocaldococcus jannaschii (strain ATCC 43067 / DSM 2661 / JAL-1 / JCM 10045 / NBRC 100440) (Methanococcus jannaschii).